Reading from the N-terminus, the 90-residue chain is DNA-directed RNA polymerase subunit omega (90 aa).

The protein belongs to the RNA polymerase subunit omega family. As to quaternary structure, the RNAP catalytic core consists of 2 alpha, 1 beta, 1 beta' and 1 omega subunit. When a sigma factor is associated with the core the holoenzyme is formed, which can initiate transcription.

The catalysed reaction is RNA(n) + a ribonucleoside 5'-triphosphate = RNA(n+1) + diphosphate. In terms of biological role, promotes RNA polymerase assembly. Latches the N- and C-terminal regions of the beta' subunit thereby facilitating its interaction with the beta and alpha subunits. The protein is DNA-directed RNA polymerase subunit omega of Saccharophagus degradans (strain 2-40 / ATCC 43961 / DSM 17024).